The chain runs to 150 residues: Heat shock protein beta-3 (150 aa).

Residues 47–150 (KTRAAQSPPV…VEVKDPVGTK (104 aa)) enclose the sHSP domain.

The protein belongs to the small heat shock protein (HSP20) family.

The protein localises to the cytoplasm. It is found in the nucleus. In terms of biological role, inhibitor of actin polymerization. This chain is Heat shock protein beta-3 (HSPB3), found in Homo sapiens (Human).